The primary structure comprises 191 residues: Large ribosomal subunit protein eL15 (191 aa).

This sequence belongs to the eukaryotic ribosomal protein eL15 family.

The polypeptide is Large ribosomal subunit protein eL15 (rpl15e) (Pyrobaculum aerophilum (strain ATCC 51768 / DSM 7523 / JCM 9630 / CIP 104966 / NBRC 100827 / IM2)).